The following is a 301-amino-acid chain: uncharacterized protein (301 aa).

Catalysis depends on charge relay system residues Ser-44 and Tyr-107. Tyr-133 serves as the catalytic Proton donor. The Schiff-base intermediate with substrate role is filled by Lys-162.

It belongs to the DapA family. Homotetramer.

It localises to the cytoplasm. This is an uncharacterized protein from Pyrobaculum islandicum (strain DSM 4184 / JCM 9189 / GEO3).